We begin with the raw amino-acid sequence, 503 residues long: MHMSKSFLIISMGFVAVSVQAQTLTRDNGAPVGDNQNSITAGEHGSVLLQDVHLIQKLQRFARERIPERVVHARGTGAHGEFVASGDFSDLTLSAPFTSKGKITPVFVRFSTVIHSKGSPETLRDPRGFATKFYTEQGNWDLVGNNLPVFFIRDSIKFPDMVHSLKPSPVTNLQDPNRFFDFFSHEPGSTHMLTWVYTNLGTPASYRTMDGFGVHAYKWINQKGDVNYVKFHWKSLQGIESLRPDEVVKVQGQDFNHLTNDLYTQINAGNHPKWDLYVQVLTPEQLSKLDYNGLDATKVWLDVPEKKVGTMTLNKVPDNFFLETEQSAFAPSNLIPGIEPSEDRLLQGRLFAYADTQLYRLGANLFQLPINRPLVEVNSHNQEGASNSAQTASDINYQPSRKLELKEDPQFKAVQTQLVGSVQQKAISNPRNFYQAGVLYRSLNEQDKQDLITNLXGBLNKVTDKEIKATMVSHFYRADKDYGTRLARATNTDLKQVAKLAAM.

Residues 1–21 (MHMSKSFLIISMGFVAVSVQA) form the signal peptide. Residues His-72 and Asn-145 contribute to the active site. Residue Tyr-353 coordinates heme.

It belongs to the catalase family. Heme serves as cofactor.

Its subcellular location is the periplasm. The enzyme catalyses 2 H2O2 = O2 + 2 H2O. Its function is as follows. Decomposes hydrogen peroxide into water and oxygen; serves to protect cells from the toxic effects of hydrogen peroxide. The chain is Catalase from Vibrio cholerae serotype O1 (strain ATCC 39315 / El Tor Inaba N16961).